Here is a 362-residue protein sequence, read N- to C-terminus: Putative lipoprotein YdaJ (362 aa).

The first 20 residues, 1–20, serve as a signal peptide directing secretion; it reads MRHVLIAVILFFLSIGLSAG. Cys21 carries the N-palmitoyl cysteine lipid modification. Residue Cys21 is the site of S-diacylglycerol cysteine attachment.

It localises to the cell membrane. The polypeptide is Putative lipoprotein YdaJ (ydaJ) (Bacillus subtilis (strain 168)).